The following is a 531-amino-acid chain: Putative UDP-glucuronosyltransferase ugt-46 (531 aa).

Residues 1–17 form the signal peptide; that stretch reads MRLIFVLLATFVNAAFS. N304 is a glycosylation site (N-linked (GlcNAc...) asparagine). The helical transmembrane segment at 493–513 threads the bilayer; that stretch reads VIIPVFWLSISLVIPTIFGWY.

It belongs to the UDP-glycosyltransferase family.

The protein resides in the membrane. The catalysed reaction is glucuronate acceptor + UDP-alpha-D-glucuronate = acceptor beta-D-glucuronoside + UDP + H(+). In Caenorhabditis elegans, this protein is Putative UDP-glucuronosyltransferase ugt-46 (ugt-46).